Here is a 428-residue protein sequence, read N- to C-terminus: Serine--tRNA ligase (428 aa).

Residue 235–237 (TAE) coordinates L-serine. 266–268 (RSE) lines the ATP pocket. An L-serine-binding site is contributed by Glu289. 353–356 (EISS) provides a ligand contact to ATP. Ser389 serves as a coordination point for L-serine.

Belongs to the class-II aminoacyl-tRNA synthetase family. Type-1 seryl-tRNA synthetase subfamily. Homodimer. The tRNA molecule binds across the dimer.

The protein resides in the cytoplasm. The enzyme catalyses tRNA(Ser) + L-serine + ATP = L-seryl-tRNA(Ser) + AMP + diphosphate + H(+). The catalysed reaction is tRNA(Sec) + L-serine + ATP = L-seryl-tRNA(Sec) + AMP + diphosphate + H(+). The protein operates within aminoacyl-tRNA biosynthesis; selenocysteinyl-tRNA(Sec) biosynthesis; L-seryl-tRNA(Sec) from L-serine and tRNA(Sec): step 1/1. Catalyzes the attachment of serine to tRNA(Ser). Is also able to aminoacylate tRNA(Sec) with serine, to form the misacylated tRNA L-seryl-tRNA(Sec), which will be further converted into selenocysteinyl-tRNA(Sec). The chain is Serine--tRNA ligase from Shewanella piezotolerans (strain WP3 / JCM 13877).